A 243-amino-acid chain; its full sequence is Probable transcriptional regulatory protein LCA_1307 (243 aa).

Residues 1–21 (MSGHSKWHNIQGRKNAQDAKR) are disordered.

It belongs to the TACO1 family.

It localises to the cytoplasm. The polypeptide is Probable transcriptional regulatory protein LCA_1307 (Latilactobacillus sakei subsp. sakei (strain 23K) (Lactobacillus sakei subsp. sakei)).